Consider the following 433-residue polypeptide: tRNA modification GTPase MnmE (433 aa).

Residues Arg-24, Glu-81, and Arg-120 each coordinate (6S)-5-formyl-5,6,7,8-tetrahydrofolate. The region spanning 216-359 (GVEIVVLGAP…LLAALRARVE (144 aa)) is the TrmE-type G domain. Asn-226 is a binding site for K(+). Residues 226-231 (NAGKST), 245-251 (SDIPGTT), 270-273 (DTAG), and 340-342 (SAR) each bind GTP. Residue Ser-230 coordinates Mg(2+). The K(+) site is built by Ser-245, Ile-247, and Thr-250. Thr-251 contributes to the Mg(2+) binding site. (6S)-5-formyl-5,6,7,8-tetrahydrofolate is bound at residue Lys-433.

This sequence belongs to the TRAFAC class TrmE-Era-EngA-EngB-Septin-like GTPase superfamily. TrmE GTPase family. As to quaternary structure, homodimer. Heterotetramer of two MnmE and two MnmG subunits. K(+) is required as a cofactor.

The protein resides in the cytoplasm. Its function is as follows. Exhibits a very high intrinsic GTPase hydrolysis rate. Involved in the addition of a carboxymethylaminomethyl (cmnm) group at the wobble position (U34) of certain tRNAs, forming tRNA-cmnm(5)s(2)U34. In Acidiphilium cryptum (strain JF-5), this protein is tRNA modification GTPase MnmE.